The following is a 647-amino-acid chain: tRNA 5-methylaminomethyl-2-thiouridine biosynthesis bifunctional protein MnmC (647 aa).

The interval 1–235 (MSIPPFSQAS…KRDMLCGRFT (235 aa)) is tRNA (mnm(5)s(2)U34)-methyltransferase. The interval 250 to 647 (IGGGIAGTAS…RGLACHPLRR (398 aa)) is FAD-dependent cmnm(5)s(2)U34 oxidoreductase.

This sequence in the N-terminal section; belongs to the methyltransferase superfamily. tRNA (mnm(5)s(2)U34)-methyltransferase family. In the C-terminal section; belongs to the DAO family. It depends on FAD as a cofactor.

It localises to the cytoplasm. It catalyses the reaction 5-aminomethyl-2-thiouridine(34) in tRNA + S-adenosyl-L-methionine = 5-methylaminomethyl-2-thiouridine(34) in tRNA + S-adenosyl-L-homocysteine + H(+). Its function is as follows. Catalyzes the last two steps in the biosynthesis of 5-methylaminomethyl-2-thiouridine (mnm(5)s(2)U) at the wobble position (U34) in tRNA. Catalyzes the FAD-dependent demodification of cmnm(5)s(2)U34 to nm(5)s(2)U34, followed by the transfer of a methyl group from S-adenosyl-L-methionine to nm(5)s(2)U34, to form mnm(5)s(2)U34. The sequence is that of tRNA 5-methylaminomethyl-2-thiouridine biosynthesis bifunctional protein MnmC from Methylobacillus flagellatus (strain ATCC 51484 / DSM 6875 / VKM B-1610 / KT).